The primary structure comprises 404 residues: Metacaspase-1 (404 aa).

Positions 1-97 are disordered; that stretch reads MHHHHQQPSY…NPQAFGHGAP (97 aa). Catalysis depends on residues His195 and Cys251.

Belongs to the peptidase C14B family.

In terms of biological role, involved in cell death (apoptosis). This chain is Metacaspase-1 (casA), found in Emericella nidulans (strain FGSC A4 / ATCC 38163 / CBS 112.46 / NRRL 194 / M139) (Aspergillus nidulans).